Reading from the N-terminus, the 410-residue chain is Putative competence-damage inducible protein (410 aa).

Belongs to the CinA family.

In Finegoldia magna (strain ATCC 29328 / DSM 20472 / WAL 2508) (Peptostreptococcus magnus), this protein is Putative competence-damage inducible protein.